The primary structure comprises 357 residues: CRISPR system Cms protein Csm5 (357 aa).

Belongs to the CRISPR-associated Csm5 family. In terms of assembly, part of the Csm effector complex that includes at least Cas10(1), Csm2(3), Csm3(5), Csm4(1), Csm5(1) and mature crRNA. The Csm complex is elongated and slightly twisted with a maximal length of 215 Angstroms and a diameter of 75-80 Angstroms. It has been modeled to have a central protein filamant of Csm3 subunits along which the dsRNA helix of paired crRNA and target RNA binds. The filament is capped at one end by Cas10 and Csm4 and at the other end by Csm5; ssDNA is thought to bind to the N-terminal HD domain of Cas10. Csm with a precursor crRNA does not include Csm5, while Cas6, the enzyme probably involved in pre-crRNA processing, is found associated with a subset of the Csm complex.

In terms of biological role, CRISPR (clustered regularly interspaced short palindromic repeat) is an adaptive immune system that provides protection against mobile genetic elements (viruses, transposable elements and conjugative plasmids). CRISPR clusters contain spacers, sequences complementary to antecedent mobile elements, and target invading nucleic acids. CRISPR clusters are transcribed and processed into CRISPR RNA (crRNA). The type III-A Csm effector complex binds crRNA and acts as a crRNA-guided RNase, DNase and cyclic oligoadenylate synthase; binding of target RNA cognate to the crRNA is required for all activities. In a heterologous host this Csm effector complex restricts ssRNA phage MS2, suggesting it may target RNA viruses in vivo. Its function is as follows. Csm functions as a non-specific ssDNase. Base-pairing between crRNA and target RNA to form a ternary Csm complex activates a ssDNase activity; target RNA cleavage suppresses the ssDNase, a temporal control that prevents uncontrolled DNA degradation. Viral RNA transcripts probably tether the Csm complex to the viral genome, recruiting Cas10 ssDNA activity which is able to degrade DNA in the transcription bubble, spatially controlling the DNase activity. This subunit might be involved in maturation of a crRNA intermediate to its mature form. In Streptococcus thermophilus, this protein is CRISPR system Cms protein Csm5.